The sequence spans 218 residues: Large ribosomal subunit protein uL3 (218 aa).

The disordered stretch occupies residues 132 to 152 (FKGQGASHGTQAVHRRPGSIG).

The protein belongs to the universal ribosomal protein uL3 family. Part of the 50S ribosomal subunit. Forms a cluster with proteins L14 and L19.

In terms of biological role, one of the primary rRNA binding proteins, it binds directly near the 3'-end of the 23S rRNA, where it nucleates assembly of the 50S subunit. The sequence is that of Large ribosomal subunit protein uL3 from Rhodococcus erythropolis (strain PR4 / NBRC 100887).